A 249-amino-acid polypeptide reads, in one-letter code: Flavin-dependent thymidylate synthase (249 aa).

One can recognise a ThyX domain in the interval 8–225 (VKVKLLEYTP…PNLFKYSGPS (218 aa)). Residues Ser-62, 86-88 (RHR), and Gln-94 contribute to the FAD site. DUMP-binding positions include 83-86 (QLVR), 94-98 (QQSQR), and Arg-164. Positions 86 to 96 (RHRIASYSQQS) match the ThyX motif motif. FAD-binding positions include 180–182 (NAR) and Asn-186. Arg-191 is a binding site for dUMP. The Involved in ionization of N3 of dUMP, leading to its activation role is filled by Arg-191.

It belongs to the thymidylate synthase ThyX family. As to quaternary structure, homotetramer. Requires FAD as cofactor.

It carries out the reaction dUMP + (6R)-5,10-methylene-5,6,7,8-tetrahydrofolate + NADPH + H(+) = dTMP + (6S)-5,6,7,8-tetrahydrofolate + NADP(+). The protein operates within pyrimidine metabolism; dTTP biosynthesis. In terms of biological role, catalyzes the reductive methylation of 2'-deoxyuridine-5'-monophosphate (dUMP) to 2'-deoxythymidine-5'-monophosphate (dTMP) while utilizing 5,10-methylenetetrahydrofolate (mTHF) as the methyl donor, and NADPH and FADH(2) as the reductant. The chain is Flavin-dependent thymidylate synthase from Clostridium tetani (strain Massachusetts / E88).